We begin with the raw amino-acid sequence, 948 residues long: Translation initiation factor IF-2 (948 aa).

3 disordered regions span residues 61–120, 162–243, and 255–285; these read IQAN…PALI, KSRE…TQSA, and QEKDKQEAKKAKKPSKPKATPTAKNNKSHKI. A compositionally biased stretch (basic and acidic residues) spans 68–78; it reads KNPEQDNKDDL. A compositionally biased stretch (low complexity) spans 173 to 189; the sequence is SNTNNANSTNNANNVNN. Residues 190 to 207 show a composition bias toward basic and acidic residues; that stretch reads AKKEISEVKKQEQEIKRH. Over residues 208–219 the composition is skewed to basic residues; it reads ENIKRRTGFRVI. The span at 230–243 shows a compositional bias: polar residues; sequence ENSVAESKKPTQSA. A tr-type G domain is found at 447–616; that stretch reads ERPPVVTIMG…LIQADIMELK (170 aa). The G1 stretch occupies residues 456–463; it reads GHVDHGKT. 456-463 provides a ligand contact to GTP; the sequence is GHVDHGKT. Residues 481 to 485 are G2; sequence GITQH. The interval 502–505 is G3; it reads DTPG. Residues 502-506 and 556-559 each bind GTP; these read DTPGH and NKMD. Residues 556 to 559 are G4; that stretch reads NKMD. The G5 stretch occupies residues 592–594; that stretch reads SAK.

Belongs to the TRAFAC class translation factor GTPase superfamily. Classic translation factor GTPase family. IF-2 subfamily.

The protein resides in the cytoplasm. Its function is as follows. One of the essential components for the initiation of protein synthesis. Protects formylmethionyl-tRNA from spontaneous hydrolysis and promotes its binding to the 30S ribosomal subunits. Also involved in the hydrolysis of GTP during the formation of the 70S ribosomal complex. In Helicobacter pylori (strain Shi470), this protein is Translation initiation factor IF-2.